The chain runs to 282 residues: Cell cycle checkpoint protein RAD1 (282 aa).

This sequence belongs to the rad1 family. Component of the toroidal 9-1-1 (RAD9-RAD1-HUS1) complex, composed of RAD9A, RAD1 and HUS1. The 9-1-1 complex associates with LIG1, POLB, FEN1, RAD17, HDAC1, RPA1 and RPA2. The 9-1-1 complex associates with the RAD17-RFC complex. RAD1 interacts with POLB, FEN1, HUS1, HUS1B, RAD9A and RAD9B. Interacts with DNAJC7. Interacts with RHNO1; interaction is direct. Expressed in testis, uterus, bladder, spleen, ovaries, lung, brain and muscle (at protein level).

The protein localises to the nucleus. In terms of biological role, component of the 9-1-1 cell-cycle checkpoint response complex that plays a major role in DNA repair. The 9-1-1 complex is recruited to DNA lesion upon damage by the RAD17-replication factor C (RFC) clamp loader complex. Acts then as a sliding clamp platform on DNA for several proteins involved in long-patch base excision repair (LP-BER). The 9-1-1 complex stimulates DNA polymerase beta (POLB) activity by increasing its affinity for the 3'-OH end of the primer-template and stabilizes POLB to those sites where LP-BER proceeds; endonuclease FEN1 cleavage activity on substrates with double, nick, or gap flaps of distinct sequences and lengths; and DNA ligase I (LIG1) on long-patch base excision repair substrates. The 9-1-1 complex is necessary for the recruitment of RHNO1 to sites of double-stranded breaks (DSB) occurring during the S phase. The protein is Cell cycle checkpoint protein RAD1 (RAD1) of Homo sapiens (Human).